The primary structure comprises 156 residues: Snaclec A6 (156 aa).

A signal peptide spans 1-23; sequence MGRSISVSFGLLVVFLSLSGTGA. Intrachain disulfides connect cysteine 27–cysteine 38, cysteine 55–cysteine 154, and cysteine 129–cysteine 146. Positions 34 to 155 constitute a C-type lectin domain; it reads HEGHCYKVFN…CGKPYRFTCE (122 aa).

This sequence belongs to the snaclec family. As to quaternary structure, heterodimer; disulfide-linked. In terms of tissue distribution, expressed by the venom gland.

The protein localises to the secreted. In terms of biological role, interferes with one step of hemostasis (modulation of platelet aggregation, or coagulation cascade, for example). The sequence is that of Snaclec A6 from Macrovipera lebetinus (Levantine viper).